The chain runs to 280 residues: Ribosomal RNA small subunit methyltransferase A (280 aa).

Histidine 13, leucine 15, glycine 40, glutamate 61, aspartate 85, and asparagine 106 together coordinate S-adenosyl-L-methionine. Positions 258-280 (RPPADVEDANAPHTEQGKGDNSQ) are disordered.

The protein belongs to the class I-like SAM-binding methyltransferase superfamily. rRNA adenine N(6)-methyltransferase family. RsmA subfamily.

The protein localises to the cytoplasm. It catalyses the reaction adenosine(1518)/adenosine(1519) in 16S rRNA + 4 S-adenosyl-L-methionine = N(6)-dimethyladenosine(1518)/N(6)-dimethyladenosine(1519) in 16S rRNA + 4 S-adenosyl-L-homocysteine + 4 H(+). In terms of biological role, specifically dimethylates two adjacent adenosines (A1518 and A1519) in the loop of a conserved hairpin near the 3'-end of 16S rRNA in the 30S particle. May play a critical role in biogenesis of 30S subunits. In Alcanivorax borkumensis (strain ATCC 700651 / DSM 11573 / NCIMB 13689 / SK2), this protein is Ribosomal RNA small subunit methyltransferase A.